The sequence spans 501 residues: Lysine--tRNA ligase (501 aa).

The Mg(2+) site is built by glutamate 402 and glutamate 409.

It belongs to the class-II aminoacyl-tRNA synthetase family. As to quaternary structure, homodimer. The cofactor is Mg(2+).

It localises to the cytoplasm. The enzyme catalyses tRNA(Lys) + L-lysine + ATP = L-lysyl-tRNA(Lys) + AMP + diphosphate. This chain is Lysine--tRNA ligase, found in Helicobacter pylori (strain Shi470).